The sequence spans 39 residues: Cytochrome b559 subunit beta (39 aa).

The helical transmembrane segment at 14–30 threads the bilayer; it reads WLAVHGLAVPTVFFLGS. A heme-binding site is contributed by histidine 18.

The protein belongs to the PsbE/PsbF family. Heterodimer of an alpha subunit and a beta subunit. PSII is composed of 1 copy each of membrane proteins PsbA, PsbB, PsbC, PsbD, PsbE, PsbF, PsbH, PsbI, PsbJ, PsbK, PsbL, PsbM, PsbT, PsbX, PsbY, PsbZ, Psb30/Ycf12, at least 3 peripheral proteins of the oxygen-evolving complex and a large number of cofactors. It forms dimeric complexes. Heme b serves as cofactor.

Its subcellular location is the plastid. The protein localises to the chloroplast thylakoid membrane. Functionally, this b-type cytochrome is tightly associated with the reaction center of photosystem II (PSII). PSII is a light-driven water:plastoquinone oxidoreductase that uses light energy to abstract electrons from H(2)O, generating O(2) and a proton gradient subsequently used for ATP formation. It consists of a core antenna complex that captures photons, and an electron transfer chain that converts photonic excitation into a charge separation. This Gnetum gnemon (Spanish joint-fir) protein is Cytochrome b559 subunit beta.